The chain runs to 209 residues: V-type ATP synthase subunit D (209 aa).

This sequence belongs to the V-ATPase D subunit family.

In terms of biological role, produces ATP from ADP in the presence of a proton gradient across the membrane. The polypeptide is V-type ATP synthase subunit D (Anaeromyxobacter dehalogenans (strain 2CP-1 / ATCC BAA-258)).